Reading from the N-terminus, the 199-residue chain is MNLFQRVKYNFEESIKTKTAAIELLVDPIVQAGELMAQCLLNEHKILSCGNGGSAADAQHFSSEMLNRFETERPSFPALALTTDASTVTAIANDYSYAEVFSKQIAGLGSTGDILLAISTSGHSKNILQAITAAHIRGMNVVALTGRDGGELFTLLGTDDIEIRVPAESTARIQETHALIIHCLCDIIDRKLIPSSEDH.

Residues methionine 36–aspartate 198 form the SIS domain. Asparagine 51–glycine 53 contacts substrate. The Zn(2+) site is built by histidine 60 and glutamate 64. Substrate is bound by residues glutamate 64, asparagine 93–aspartate 94, serine 119–serine 121, serine 124, and glutamine 174. Residues glutamine 174 and histidine 182 each contribute to the Zn(2+) site.

This sequence belongs to the SIS family. GmhA subfamily. As to quaternary structure, homotetramer. Zn(2+) is required as a cofactor.

It localises to the cytoplasm. The catalysed reaction is 2 D-sedoheptulose 7-phosphate = D-glycero-alpha-D-manno-heptose 7-phosphate + D-glycero-beta-D-manno-heptose 7-phosphate. It functions in the pathway carbohydrate biosynthesis; D-glycero-D-manno-heptose 7-phosphate biosynthesis; D-glycero-alpha-D-manno-heptose 7-phosphate and D-glycero-beta-D-manno-heptose 7-phosphate from sedoheptulose 7-phosphate: step 1/1. Functionally, catalyzes the isomerization of sedoheptulose 7-phosphate in D-glycero-D-manno-heptose 7-phosphate. In Coxiella burnetii (strain CbuK_Q154) (Coxiella burnetii (strain Q154)), this protein is Phosphoheptose isomerase.